The primary structure comprises 588 residues: Intracellular maltogenic amylase (588 aa).

Positions 149, 155, 174, and 176 each coordinate Ca(2+). Residues histidine 249 and arginine 325 each coordinate substrate. Residue aspartate 327 is the Nucleophile of the active site. Glutamate 356 serves as the catalytic Proton donor. Substrate-binding positions include 422–423 (HD), aspartate 467, and arginine 471.

Belongs to the glycosyl hydrolase 13 family. BbmA subfamily. As to quaternary structure, monomer or homodimer; in equilibrium. The cofactor is Ca(2+).

The protein localises to the cytoplasm. Its function is as follows. Hydrolyzes beta-cyclodextrin to maltose and glucose, soluble starch to maltose and glucose, and pullulan to panose with trace amounts of maltose and glucose. It is also able to hydrolyze acarbose. Can also exhibit a transglycosylation activity transferring glucose or maltose to another moiety of sugars by forming alpha-(1,6)- and alpha-(1,3)-glycosidic linkages upon the hydrolysis of substrate at concentrations of 5% or higher. The polypeptide is Intracellular maltogenic amylase (bbmA) (Bacillus subtilis).